We begin with the raw amino-acid sequence, 253 residues long: 5'/3'-nucleotidase SurE (253 aa).

Residues Asp-8, Asp-9, Ser-39, and Asn-92 each contribute to the a divalent metal cation site.

Belongs to the SurE nucleotidase family. It depends on a divalent metal cation as a cofactor.

The protein localises to the cytoplasm. The enzyme catalyses a ribonucleoside 5'-phosphate + H2O = a ribonucleoside + phosphate. It catalyses the reaction a ribonucleoside 3'-phosphate + H2O = a ribonucleoside + phosphate. It carries out the reaction [phosphate](n) + H2O = [phosphate](n-1) + phosphate + H(+). Nucleotidase with a broad substrate specificity as it can dephosphorylate various ribo- and deoxyribonucleoside 5'-monophosphates and ribonucleoside 3'-monophosphates with highest affinity to 3'-AMP. Also hydrolyzes polyphosphate (exopolyphosphatase activity) with the preference for short-chain-length substrates (P20-25). Might be involved in the regulation of dNTP and NTP pools, and in the turnover of 3'-mononucleotides produced by numerous intracellular RNases (T1, T2, and F) during the degradation of various RNAs. The chain is 5'/3'-nucleotidase SurE from Escherichia coli O127:H6 (strain E2348/69 / EPEC).